We begin with the raw amino-acid sequence, 126 residues long: Plastocyanin (126 aa).

The N-terminal stretch at 1-28 (MSKKFLTILAGLLLVVSSFFLSVSPAAA) is a signal peptide. In terms of domain architecture, Plastocyanin-like spans 29–126 (ANATVKMGSD…AGMVGKVVVE (98 aa)). Cu cation contacts are provided by His-67, Cys-111, His-114, and Met-119.

Belongs to the plastocyanin family. The cofactor is Cu(2+).

The protein localises to the cellular thylakoid membrane. In terms of biological role, participates in electron transfer between P700 and the cytochrome b6-f complex in photosystem I. This chain is Plastocyanin (petE), found in Synechocystis sp. (strain ATCC 27184 / PCC 6803 / Kazusa).